We begin with the raw amino-acid sequence, 1102 residues long: Putative ISWI chromatin-remodeling complex subunit YPL216W (1102 aa).

Residues 23 to 131 form the WAC domain; the sequence is ETPWVIKESS…DTVCLKTIQK (109 aa). A disordered region spans residues 271–301; that stretch reads ELYTPLTIPPESDVEPADWKETSETSETSET. Positions 375–435 constitute a DDT domain; the sequence is QFPTERLLVV…FLKTYNSKGS (61 aa). Residues 673–743 adopt a coiled-coil conformation; it reads CNGIRLKLDS…EDIAFLEAKL (71 aa).

It localises to the nucleus. In terms of biological role, may be required for the activity of an ISWI chromatin-remodeling complex. This chain is Putative ISWI chromatin-remodeling complex subunit YPL216W, found in Saccharomyces cerevisiae (strain ATCC 204508 / S288c) (Baker's yeast).